A 153-amino-acid chain; its full sequence is NADPH-dependent 7-cyano-7-deazaguanine reductase (153 aa).

The tract at residues 1–26 (MVKIHDGASQLGANVAAPRSPEEATL) is disordered. The active-site Thioimide intermediate is Cys51. The active-site Proton donor is the Asp58. Substrate-binding positions include 73-75 (VES) and 92-93 (HE).

This sequence belongs to the GTP cyclohydrolase I family. QueF type 1 subfamily.

It is found in the cytoplasm. The catalysed reaction is 7-aminomethyl-7-carbaguanine + 2 NADP(+) = 7-cyano-7-deazaguanine + 2 NADPH + 3 H(+). It participates in tRNA modification; tRNA-queuosine biosynthesis. Its function is as follows. Catalyzes the NADPH-dependent reduction of 7-cyano-7-deazaguanine (preQ0) to 7-aminomethyl-7-deazaguanine (preQ1). This Methylocella silvestris (strain DSM 15510 / CIP 108128 / LMG 27833 / NCIMB 13906 / BL2) protein is NADPH-dependent 7-cyano-7-deazaguanine reductase.